A 343-amino-acid polypeptide reads, in one-letter code: Zinc finger CCCH domain-containing protein 39 (343 aa).

Positions 114-147 (LSHLADAADEAAALRQENAELRVANNDLACRIAK) form a coiled coil. C3H1-type zinc fingers lie at residues 268–296 (MFKT…HGVA) and 306–334 (RYKT…HSIT).

This is Zinc finger CCCH domain-containing protein 39 from Oryza sativa subsp. japonica (Rice).